A 736-amino-acid chain; its full sequence is Catalase-peroxidase 2 (736 aa).

Residues 91–227 (WHSAGTYRMG…LAAVQMGLIY (137 aa)) constitute a cross-link (tryptophyl-tyrosyl-methioninium (Trp-Tyr) (with M-253)). The active-site Proton acceptor is histidine 92. Positions 227-253 (YVNPEGPDGNPDPVAAAYDIREVFGRM) form a cross-link, tryptophyl-tyrosyl-methioninium (Tyr-Met) (with W-91). Histidine 268 contacts heme b.

Belongs to the peroxidase family. Peroxidase/catalase subfamily. In terms of assembly, homodimer or homotetramer. The cofactor is heme b. Formation of the three residue Trp-Tyr-Met cross-link is important for the catalase, but not the peroxidase activity of the enzyme.

The enzyme catalyses H2O2 + AH2 = A + 2 H2O. It catalyses the reaction 2 H2O2 = O2 + 2 H2O. Its function is as follows. Bifunctional enzyme with both catalase and broad-spectrum peroxidase activity. Shows peroxidase specificity towards odianisidine, ABTS and pyrogallol, but methoxyphenol and 2-chloronaphthol are not peroxidized. The sequence is that of Catalase-peroxidase 2 from Burkholderia cenocepacia (strain ATCC BAA-245 / DSM 16553 / LMG 16656 / NCTC 13227 / J2315 / CF5610) (Burkholderia cepacia (strain J2315)).